The primary structure comprises 190 residues: Imidazoleglycerol-phosphate dehydratase (190 aa).

The protein belongs to the imidazoleglycerol-phosphate dehydratase family.

The protein resides in the cytoplasm. It carries out the reaction D-erythro-1-(imidazol-4-yl)glycerol 3-phosphate = 3-(imidazol-4-yl)-2-oxopropyl phosphate + H2O. The protein operates within amino-acid biosynthesis; L-histidine biosynthesis; L-histidine from 5-phospho-alpha-D-ribose 1-diphosphate: step 6/9. The chain is Imidazoleglycerol-phosphate dehydratase from Sulfurimonas denitrificans (strain ATCC 33889 / DSM 1251) (Thiomicrospira denitrificans (strain ATCC 33889 / DSM 1251)).